Reading from the N-terminus, the 219-residue chain is Octanoyltransferase (219 aa).

The BPL/LPL catalytic domain occupies 31–206; that stretch reads TASADEIWLV…ECLRLMKASA (176 aa). Residues 70 to 77, 137 to 139, and 150 to 152 contribute to the substrate site; these read RGGQVTFH, SLG, and GLA. Cysteine 168 acts as the Acyl-thioester intermediate in catalysis.

It belongs to the LipB family.

Its subcellular location is the cytoplasm. It catalyses the reaction octanoyl-[ACP] + L-lysyl-[protein] = N(6)-octanoyl-L-lysyl-[protein] + holo-[ACP] + H(+). It participates in protein modification; protein lipoylation via endogenous pathway; protein N(6)-(lipoyl)lysine from octanoyl-[acyl-carrier-protein]: step 1/2. Catalyzes the transfer of endogenously produced octanoic acid from octanoyl-acyl-carrier-protein onto the lipoyl domains of lipoate-dependent enzymes. Lipoyl-ACP can also act as a substrate although octanoyl-ACP is likely to be the physiological substrate. The chain is Octanoyltransferase from Sodalis glossinidius (strain morsitans).